The chain runs to 114 residues: Large ribosomal subunit protein uL24 (114 aa).

The protein belongs to the universal ribosomal protein uL24 family. In terms of assembly, part of the 50S ribosomal subunit.

Functionally, one of two assembly initiator proteins, it binds directly to the 5'-end of the 23S rRNA, where it nucleates assembly of the 50S subunit. In terms of biological role, one of the proteins that surrounds the polypeptide exit tunnel on the outside of the subunit. The chain is Large ribosomal subunit protein uL24 from Acidothermus cellulolyticus (strain ATCC 43068 / DSM 8971 / 11B).